We begin with the raw amino-acid sequence, 798 residues long: uncharacterized protein (798 aa).

Positions 1–22 are cleaved as a signal peptide; it reads MKFKYGAIVFSGLLGVSAILAA. Cysteine 23 carries the N-palmitoyl cysteine lipid modification. Cysteine 23 is lipidated: S-diacylglycerol cysteine. The span at 178-192 shows a compositional bias: basic and acidic residues; it reads SKGAQKDNKSAEVQR. 4 disordered regions span residues 178-204, 226-260, 443-463, and 478-515; these read SKGA…TQPL, NGKK…ATSD, EVNA…QSDQ, and SDIK…TPKK. Polar residues predominate over residues 193-204; that stretch reads KSTGQKTVTQPL. The segment covering 226 to 235 has biased composition (basic and acidic residues); that stretch reads NGKKKEEKKS. The segment covering 478–495 has biased composition (basic and acidic residues); it reads SDIKVKPKTQAESKKSSD. Polar residues predominate over residues 496 to 515; it reads SKQTANTGKGSNSKQQTPKK.

It belongs to the MG185/MG260 family.

The protein localises to the cell membrane. This is an uncharacterized protein from Mycoplasma pneumoniae (strain ATCC 29342 / M129 / Subtype 1) (Mycoplasmoides pneumoniae).